The chain runs to 529 residues: 2-(3-amino-3-carboxypropyl)histidine synthase subunit 2-2 (529 aa).

[4Fe-4S] cluster-binding residues include C130, C151, and C366.

Belongs to the DPH1/DPH2 family. DPH2 subfamily. Component of the 2-(3-amino-3-carboxypropyl)histidine synthase complex composed of DPH1, DPH2, DPH3 and a NADH-dependent reductase, predominantly CBR1. The cofactor is [4Fe-4S] cluster.

It is found in the cytoplasm. Its pathway is protein modification; peptidyl-diphthamide biosynthesis. Its function is as follows. Required for the first step of diphthamide biosynthesis, a post-translational modification of histidine which occurs in elongation factor 2. DPH1 and DPH2 transfer a 3-amino-3-carboxypropyl (ACP) group from S-adenosyl-L-methionine (SAM) to a histidine residue, the reaction is assisted by a reduction system comprising DPH3 and a NADH-dependent reductase, predominantly CBR1. Facilitates the reduction of the catalytic iron-sulfur cluster found in the DPH1 subunit. The chain is 2-(3-amino-3-carboxypropyl)histidine synthase subunit 2-2 from Candida albicans (strain SC5314 / ATCC MYA-2876) (Yeast).